We begin with the raw amino-acid sequence, 487 residues long: Glutamyl-tRNA(Gln) amidotransferase subunit A (487 aa).

Lysine 78 serves as the catalytic Charge relay system. Positions 135–144 (SAYQTTTNPW) are enriched in polar residues. The segment at 135–155 (SAYQTTTNPWDASRVPGGSSG) is disordered. Serine 153 functions as the Charge relay system in the catalytic mechanism. Serine 177 acts as the Acyl-ester intermediate in catalysis.

The protein belongs to the amidase family. GatA subfamily. As to quaternary structure, heterotrimer of A, B and C subunits.

The enzyme catalyses L-glutamyl-tRNA(Gln) + L-glutamine + ATP + H2O = L-glutaminyl-tRNA(Gln) + L-glutamate + ADP + phosphate + H(+). Allows the formation of correctly charged Gln-tRNA(Gln) through the transamidation of misacylated Glu-tRNA(Gln) in organisms which lack glutaminyl-tRNA synthetase. The reaction takes place in the presence of glutamine and ATP through an activated gamma-phospho-Glu-tRNA(Gln). The protein is Glutamyl-tRNA(Gln) amidotransferase subunit A of Maridesulfovibrio salexigens (strain ATCC 14822 / DSM 2638 / NCIMB 8403 / VKM B-1763) (Desulfovibrio salexigens).